A 65-amino-acid chain; its full sequence is Large ribosomal subunit protein bL33c (65 aa).

This sequence belongs to the bacterial ribosomal protein bL33 family.

The protein localises to the plastid. Its subcellular location is the chloroplast. This Pyropia yezoensis (Susabi-nori) protein is Large ribosomal subunit protein bL33c.